Consider the following 1156-residue polypeptide: Chromosome partition protein Smc (1156 aa).

37–44 (PNGAGKSN) contacts ATP. Residues 167–499 (SGIGEYERKK…AIEREVRSFS (333 aa)) adopt a coiled-coil conformation. The SMC hinge domain maps to 509–624 (KGVYGSVSEL…VENFESAKAI (116 aa)). Positions 654 to 1001 (GELNKRYYEE…EETENKKRKV (348 aa)) form a coiled coil.

Belongs to the SMC family. As to quaternary structure, homodimer.

The protein resides in the cytoplasm. In terms of biological role, required for chromosome condensation and partitioning. The sequence is that of Chromosome partition protein Smc from Aquifex aeolicus (strain VF5).